The chain runs to 251 residues: Triosephosphate isomerase (251 aa).

Residue 12–14 participates in substrate binding; it reads NWK. Catalysis depends on H99, which acts as the Electrophile. E169 functions as the Proton acceptor in the catalytic mechanism. Substrate-binding positions include G175, S214, and 235 to 236; that span reads GG.

It belongs to the triosephosphate isomerase family. In terms of assembly, homodimer.

It localises to the cytoplasm. The catalysed reaction is D-glyceraldehyde 3-phosphate = dihydroxyacetone phosphate. Its pathway is carbohydrate biosynthesis; gluconeogenesis. It participates in carbohydrate degradation; glycolysis; D-glyceraldehyde 3-phosphate from glycerone phosphate: step 1/1. Functionally, involved in the gluconeogenesis. Catalyzes stereospecifically the conversion of dihydroxyacetone phosphate (DHAP) to D-glyceraldehyde-3-phosphate (G3P). This is Triosephosphate isomerase from Bradyrhizobium sp. (strain ORS 278).